Here is a 339-residue protein sequence, read N- to C-terminus: 3-isopropylmalate dehydrogenase (339 aa).

Positions 88, 98, 122, and 212 each coordinate substrate. Positions 212, 236, and 240 each coordinate Mg(2+). 272 to 284 (GSAPDIAGQGIAD) is an NAD(+) binding site.

It belongs to the isocitrate and isopropylmalate dehydrogenases family. LeuB type 2 subfamily. As to quaternary structure, homodimer. Requires Mg(2+) as cofactor. Mn(2+) is required as a cofactor.

Its subcellular location is the cytoplasm. It carries out the reaction (2R,3S)-3-isopropylmalate + NAD(+) = 4-methyl-2-oxopentanoate + CO2 + NADH. The protein operates within amino-acid biosynthesis; L-leucine biosynthesis; L-leucine from 3-methyl-2-oxobutanoate: step 3/4. In terms of biological role, catalyzes the oxidation of 3-carboxy-2-hydroxy-4-methylpentanoate (3-isopropylmalate) to 3-carboxy-4-methyl-2-oxopentanoate. The product decarboxylates to 4-methyl-2 oxopentanoate. The sequence is that of 3-isopropylmalate dehydrogenase from Corynebacterium urealyticum (strain ATCC 43042 / DSM 7109).